The primary structure comprises 290 residues: Homeobox protein EMX1 (290 aa).

The segment at residues 192–251 (PKRIRTAFSPSQLLRLERAFEKNHYVVGAERKQLAGSLSLSETQVKVWFQNRRTKYKRQK) is a DNA-binding region (homeobox). A disordered region spans residues 249 to 290 (RQKLEEEGPESEQKKKGSHHINRWRIATKQANGEDIDVTSND). Positions 250 to 263 (QKLEEEGPESEQKK) are enriched in basic and acidic residues.

It belongs to the EMX homeobox family. As to quaternary structure, interacts with WRD11 (via the N-terminal and the central portion of the protein); the interaction associates EMX1 with GLI3. As to expression, cerebral cortex.

It is found in the nucleus. Its subcellular location is the cytoplasm. Transcription factor, which in cooperation with EMX2, acts to generate the boundary between the roof and archipallium in the developing brain. May function in combinations with OTX1/2 to specify cell fates in the developing central nervous system. This Homo sapiens (Human) protein is Homeobox protein EMX1.